Consider the following 311-residue polypeptide: Tyrosine recombinase XerC (311 aa).

The Core-binding (CB) domain occupies 14-100; the sequence is ESLNETAKKF…SLRTFYKVLL (87 aa). The 183-residue stretch at 121-303 folds into the Tyr recombinase domain; the sequence is EVPKNFRINE…SKEKIKEVYR (183 aa). Active-site residues include Arg163, Lys187, His255, Arg258, and His281. Tyr290 acts as the O-(3'-phospho-DNA)-tyrosine intermediate in catalysis.

Belongs to the 'phage' integrase family. XerC subfamily. In terms of assembly, forms a cyclic heterotetrameric complex composed of two molecules of XerC and two molecules of XerD.

It localises to the cytoplasm. Site-specific tyrosine recombinase, which acts by catalyzing the cutting and rejoining of the recombining DNA molecules. The XerC-XerD complex is essential to convert dimers of the bacterial chromosome into monomers to permit their segregation at cell division. It also contributes to the segregational stability of plasmids. This Leptospira interrogans serogroup Icterohaemorrhagiae serovar copenhageni (strain Fiocruz L1-130) protein is Tyrosine recombinase XerC.